Reading from the N-terminus, the 160-residue chain is Cyclic pyranopterin monophosphate synthase (160 aa).

Residues leucine 75 to histidine 77 and methionine 113 to glutamate 114 each bind substrate. Aspartate 128 is an active-site residue.

Belongs to the MoaC family. Homohexamer; trimer of dimers.

The catalysed reaction is (8S)-3',8-cyclo-7,8-dihydroguanosine 5'-triphosphate = cyclic pyranopterin phosphate + diphosphate. Its pathway is cofactor biosynthesis; molybdopterin biosynthesis. Its function is as follows. Catalyzes the conversion of (8S)-3',8-cyclo-7,8-dihydroguanosine 5'-triphosphate to cyclic pyranopterin monophosphate (cPMP). The protein is Cyclic pyranopterin monophosphate synthase of Sodalis glossinidius (strain morsitans).